A 208-amino-acid chain; its full sequence is FMN-dependent NADH:quinone oxidoreductase 4 (208 aa).

This sequence belongs to the azoreductase type 1 family. In terms of assembly, homodimer. Requires FMN as cofactor.

The enzyme catalyses 2 a quinone + NADH + H(+) = 2 a 1,4-benzosemiquinone + NAD(+). It carries out the reaction N,N-dimethyl-1,4-phenylenediamine + anthranilate + 2 NAD(+) = 2-(4-dimethylaminophenyl)diazenylbenzoate + 2 NADH + 2 H(+). Functionally, quinone reductase that provides resistance to thiol-specific stress caused by electrophilic quinones. Its function is as follows. Also exhibits azoreductase activity. Catalyzes the reductive cleavage of the azo bond in aromatic azo compounds to the corresponding amines. The protein is FMN-dependent NADH:quinone oxidoreductase 4 of Bacillus cereus (strain ZK / E33L).